The primary structure comprises 90 residues: MEYQYPLDLDWSNEEMVDVIAFFNKIENYYENSVNGQDLMNHYKRFKEIVPSKAEEKQLFKEFEEKSNYNSYKVVQEVKNNPELTSFSAK.

This sequence belongs to the UPF0223 family.

In Staphylococcus haemolyticus (strain JCSC1435), this protein is UPF0223 protein SH1855.